A 560-amino-acid polypeptide reads, in one-letter code: Interferon alpha/beta receptor 1 (560 aa).

The first 24 residues, 1-24 (MLGLLGATTLMLVAGAPWVLPAGG), serve as a signal peptide directing secretion. Topologically, residues 25–437 (ADLRSPENVV…EKTKPGSTSQ (413 aa)) are extracellular. Fibronectin type-III domains follow at residues 29 to 125 (SPEN…FQEA), 133 to 224 (HLEA…INTT), 231 to 329 (SPEN…TEMQ), and 333 to 433 (FPPV…TKPG). The N-linked (GlcNAc...) asparagine glycan is linked to asparagine 55. Cysteines 76 and 84 form a disulfide. N-linked (GlcNAc...) asparagine glycans are attached at residues asparagine 85, asparagine 108, and asparagine 172. A disulfide bridge connects residues cysteine 199 and cysteine 220. Residues asparagine 222, asparagine 249, and asparagine 254 are each glycosylated (N-linked (GlcNAc...) asparagine). An intrachain disulfide couples cysteine 283 to cysteine 291. N-linked (GlcNAc...) asparagine glycans are attached at residues asparagine 313, asparagine 377, and asparagine 417. A disulfide bond links cysteine 404 and cysteine 427. Residues 438 to 458 (AWLIAGILSAILLFPAVFYGV) form a helical membrane-spanning segment. Residues 459–560 (KVVSRCINYV…GEEILRQAAV (102 aa)) lie on the Cytoplasmic side of the membrane. Cysteine 464 is lipidated: S-palmitoyl cysteine. Tyrosine 467 and tyrosine 482 each carry phosphotyrosine; by TYK2. Positions 492-501 (LLSTSEEQTE) are important for interaction with TYK2. Serine 496 and serine 536 each carry phosphoserine. The tract at residues 520-560 (QIDDNHSRCSSQTNRDSGVYSNEDENSGSKIGEEILRQAAV) is disordered. The segment covering 527-539 (RCSSQTNRDSGVY) has biased composition (polar residues). Residues 550–560 (IGEEILRQAAV) are compositionally biased toward basic and acidic residues.

This sequence belongs to the type II cytokine receptor family. In terms of assembly, heterodimer with IFNAR2; forming the receptor for type I interferon. Interacts with TYK2. Interacts with STAT1 and STAT2; the interaction requires its phosphorylation at Tyr-482. Interacts (serine-phosphorylated form) with FBXW11, the substrate recognition component of a SCF (SKP1-CUL1-F-box protein) E3 ubiquitin-protein ligase complex. Interacts with SHMT2; this promotes interaction with ABRAXAS2 and the BRISC complex. Interacts with TRIM10; this interaction prevents association between IFNAR1 and TYK2. Post-translationally, ubiquitinated, leading to its internalization and degradation. Polyubiquitinated via 'Lys-48'-linked and 'Lys-63'-linked ubiquitin chains, leading to receptor internalization and lysosomal degradation. The 'Lys-63'-linked ubiquitin chains are cleaved off by the BRISC complex. Phosphorylated on tyrosine residues in response to interferon-binding: phosphorylation by TYK2 tyrosine kinase creates docking sites for STAT proteins. Phosphorylated on serine residues in response to interferon binding; this promotes interaction with FBXW11 and ubiquitination. In terms of processing, palmitoylation at Cys-464 is required for the activation of STAT1 and STAT2.

The protein resides in the cell membrane. It is found in the late endosome. It localises to the lysosome. Together with IFNAR2, forms the heterodimeric receptor for type I interferons (including interferons alpha, beta, epsilon, omega and kappa). Type I interferon binding activates the JAK-STAT signaling cascade, resulting in transcriptional activation or repression of interferon-regulated genes that encode the effectors of the interferon response. Mechanistically, type I interferon-binding brings the IFNAR1 and IFNAR2 subunits into close proximity with one another, driving their associated Janus kinases (JAKs) (TYK2 bound to IFNAR1 and JAK1 bound to IFNAR2) to cross-phosphorylate one another. The activated kinases phosphorylate specific tyrosine residues on the intracellular domains of IFNAR1 and IFNAR2, forming docking sites for the STAT transcription factors. STAT proteins are then phosphorylated by the JAKs, promoting their translocation into the nucleus to regulate expression of interferon-regulated genes. Can also act independently of IFNAR2: form an active IFNB1 receptor by itself and activate a signaling cascade that does not involve activation of the JAK-STAT pathway. The polypeptide is Interferon alpha/beta receptor 1 (IFNAR1) (Sus scrofa (Pig)).